Reading from the N-terminus, the 685-residue chain is DNA topoisomerase 4 subunit B (685 aa).

The segment covering 389–400 (EAARKAREESRN) has biased composition (basic and acidic residues). Residues 389–427 (EAARKAREESRNGKKRKKGESLLSGKLTPAQSRNPKKNE) are disordered. Positions 426–540 (NELYLVEGDS…AGKVYIALPP (115 aa)) constitute a Toprim domain. Mg(2+) is bound by residues Glu-432, Asp-505, and Asp-507. Acidic residues-rich tracts occupy residues 644–654 (GSILDRSEEDT) and 673–685 (QTDD…FDIE). The segment at 644–685 (GSILDRSEEDTSAPTGESLLDAEKTKEAEQTDDTEISLFDIE) is disordered.

It belongs to the type II topoisomerase family. ParE type 1 subfamily. In terms of assembly, heterotetramer composed of ParC and ParE. Requires Mg(2+) as cofactor. Mn(2+) is required as a cofactor. It depends on Ca(2+) as a cofactor.

The catalysed reaction is ATP-dependent breakage, passage and rejoining of double-stranded DNA.. Its activity is regulated as follows. Pyrrolopyrimidines inhibit both GyrB and its paralog in topoisomerase IV (parE). Its function is as follows. Topoisomerase IV is essential for chromosome segregation. It relaxes supercoiled DNA. Performs the decatenation events required during the replication of a circular DNA molecule. The polypeptide is DNA topoisomerase 4 subunit B (Enterococcus faecalis (strain ATCC 700802 / V583)).